We begin with the raw amino-acid sequence, 358 residues long: Purine permease 2 (358 aa).

10 helical membrane passes run 6 to 26 (VLVIINCIFLAIGNCGGPLMM), 37 to 57 (IWFPSFLQTVGCPLIFFPLLL), 74 to 94 (FFLMKPPLFIAAIVVGLLVGF), 110 to 130 (TASLIISAQLGFTALFAFFMV), 134 to 154 (FTPFTINAIVLLTGGAVVLAL), 170 to 190 (VVGFIMTLGAALLYGFILPLV), 209 to 229 (FQMVLCFAATCVCLVGMLAAG), 262 to 282 (VIVFTAIIWQAFFVGAIGLIF), 288 to 308 (VSGIMVSALLPVTVILAVICF), and 312 to 332 (FQAGKGVALALSLWGSVSYFY). The 109-residue stretch at 46 to 154 (VGCPLIFFPL…LTGGAVVLAL (109 aa)) folds into the EamA domain.

It belongs to the purine permeases (TC 2.A.7.14) family. In terms of tissue distribution, expressed in the vascular system of leaves. Restricted to the phloem. Expressed in flowers and roots and not detected in stems.

It localises to the membrane. With respect to regulation, competitive inhibition of adenine transport by isopentenyladenine, kinetin, benzylaminopurine, trans- and cis-zeatin and trans-zeatin riboside. Its function is as follows. Mediates adenine transport. May be involved in the uptake of cytokinin analogs. The polypeptide is Purine permease 2 (PUP2) (Arabidopsis thaliana (Mouse-ear cress)).